We begin with the raw amino-acid sequence, 781 residues long: ATP-dependent RNA helicase rok1 (781 aa).

2 disordered regions span residues 7–108 and 134–177; these read LSRG…KPKL and QDEA…IYPQ. Residues 48–57 are compositionally biased toward basic residues; sequence KRGKKRKRKG. Over residues 66–75 the composition is skewed to acidic residues; that stretch reads SGDEDDDASD. 2 stretches are compositionally biased toward basic and acidic residues: residues 84–108 and 139–173; these read TPEE…KPKL and TEEK…DKKQ. Residues 184–212 carry the Q motif motif; that stretch reads ELKYTYGIHPVLADNITRQGFRVPTEVQM. The Helicase ATP-binding domain occupies 233-487; that stretch reads DVKVEKGIDF…TKHIDKRAKR (255 aa). 246 to 253 contributes to the ATP binding site; sequence APTGSGKT. The interval 323–386 is disordered; that stretch reads ESNEQEETEQ…SRAKGDQKFK (64 aa). Positions 339–369 are enriched in acidic residues; that stretch reads QDSDSDSEAESEPEEVMKIDEEEEEEEESDS. A compositionally biased stretch (basic and acidic residues) spans 370 to 386; it reads DAEKKTESRAKGDQKFK. The short motif at 434-437 is the DEAD box element; it reads DEAD. Residues 527 to 689 enclose the Helicase C-terminal domain; it reads ALRQLLHPVS…GKDIDEKDTV (163 aa). The tract at residues 718–781 is disordered; the sequence is RGVESRRTGG…KAEEEWTGLD (64 aa). Over residues 736–752 the composition is skewed to basic and acidic residues; that stretch reads SWERRRENNRREAIEAS.

The protein belongs to the DEAD box helicase family. DDX52/ROK1 subfamily. As to quaternary structure, interacts with the U3 snoRNA and is associated with the 90S and 40S pre-ribosomes.

It localises to the nucleus. It is found in the nucleolus. It catalyses the reaction ATP + H2O = ADP + phosphate + H(+). ATP-dependent RNA helicase involved in 40S ribosomal subunit biogenesis. Required for the processing and cleavage of 35S pre-rRNA at sites A0, A1, and A2, leading to mature 18S rRNA. This chain is ATP-dependent RNA helicase rok1 (drh-16), found in Neurospora crassa (strain ATCC 24698 / 74-OR23-1A / CBS 708.71 / DSM 1257 / FGSC 987).